Reading from the N-terminus, the 761-residue chain is Subtilisin-like protease SBT3.15 (761 aa).

The first 21 residues, Met-1–Phe-21, serve as a signal peptide directing secretion. A propeptide spans Leu-22–Lys-120 (activation peptide). An Inhibitor I9 domain is found at Val-41–Leu-119. The 480-residue stretch at Pro-134–Ala-613 folds into the Peptidase S8 domain. Asn-151 carries N-linked (GlcNAc...) asparagine glycosylation. Residue Asp-164 is the Charge relay system of the active site. Asn-197 carries an N-linked (GlcNAc...) asparagine glycan. Catalysis depends on His-241, which acts as the Charge relay system. Residues Asn-256 and Asn-384 are each glycosylated (N-linked (GlcNAc...) asparagine). The active-site Charge relay system is Ser-544. N-linked (GlcNAc...) asparagine glycosylation occurs at Asn-636.

The protein belongs to the peptidase S8 family.

It localises to the secreted. This Arabidopsis thaliana (Mouse-ear cress) protein is Subtilisin-like protease SBT3.15.